The primary structure comprises 103 residues: Small ribosomal subunit protein uS10 (103 aa).

Belongs to the universal ribosomal protein uS10 family. Part of the 30S ribosomal subunit.

Functionally, involved in the binding of tRNA to the ribosomes. This chain is Small ribosomal subunit protein uS10, found in Borreliella burgdorferi (strain ATCC 35210 / DSM 4680 / CIP 102532 / B31) (Borrelia burgdorferi).